A 435-amino-acid polypeptide reads, in one-letter code: Adenylosuccinate synthetase (435 aa).

GTP is bound by residues 17–23 (GDEGKGK) and 45–47 (GHT). Catalysis depends on Asp-18, which acts as the Proton acceptor. Mg(2+) is bound by residues Asp-18 and Gly-45. Residues 18–21 (DEGK), 43–46 (NAGH), Thr-135, Arg-149, Gln-230, Thr-245, and Arg-309 each bind IMP. His-46 functions as the Proton donor in the catalytic mechanism. 305 to 311 (TVSGRAR) is a substrate binding site. GTP contacts are provided by residues Arg-311, 337–339 (LLD), and 419–421 (SVG).

This sequence belongs to the adenylosuccinate synthetase family. Homodimer. It depends on Mg(2+) as a cofactor.

It localises to the cytoplasm. It carries out the reaction IMP + L-aspartate + GTP = N(6)-(1,2-dicarboxyethyl)-AMP + GDP + phosphate + 2 H(+). It participates in purine metabolism; AMP biosynthesis via de novo pathway; AMP from IMP: step 1/2. Plays an important role in the de novo pathway of purine nucleotide biosynthesis. Catalyzes the first committed step in the biosynthesis of AMP from IMP. The sequence is that of Adenylosuccinate synthetase from Spiroplasma citri.